A 68-amino-acid chain; its full sequence is uncharacterized protein (68 aa).

This is an uncharacterized protein from Orgyia pseudotsugata (Douglas-fir tussock moth).